The chain runs to 65 residues: Chymotrypsin/elastase isoinhibitors 2 to 5 (65 aa).

Cystine bridges form between C4–C37, C13–C32, C16–C28, C20–C59, and C39–C53. The TIL domain occupies 4-59; that stretch reads CGKNEVWTECTGCELKCGQDEKTPCALMCRPPSCECTPGRGMRRTHDGKCVPVSEC.

Belongs to the serine protease inhibitor-like (TIL domain-containing) family.

It is found in the secreted. Its function is as follows. Defends the organism against the host's proteinases. This Ascaris suum (Pig roundworm) protein is Chymotrypsin/elastase isoinhibitors 2 to 5.